The following is a 615-amino-acid chain: DNA mismatch repair protein MutL (615 aa).

Positions Phe-363 to Tyr-397 are disordered. The span at Ala-364–Pro-391 shows a compositional bias: low complexity.

This sequence belongs to the DNA mismatch repair MutL/HexB family.

This protein is involved in the repair of mismatches in DNA. It is required for dam-dependent methyl-directed DNA mismatch repair. May act as a 'molecular matchmaker', a protein that promotes the formation of a stable complex between two or more DNA-binding proteins in an ATP-dependent manner without itself being part of a final effector complex. This is DNA mismatch repair protein MutL from Escherichia coli O8 (strain IAI1).